We begin with the raw amino-acid sequence, 161 residues long: Nucleotide-binding protein SO_3815 (161 aa).

Belongs to the YajQ family.

Nucleotide-binding protein. The protein is Nucleotide-binding protein SO_3815 of Shewanella oneidensis (strain ATCC 700550 / JCM 31522 / CIP 106686 / LMG 19005 / NCIMB 14063 / MR-1).